The chain runs to 100 residues: UPF0213 protein YhbQ (100 aa).

Residues 2-77 (TPWFLYLIRT…KQLTKRQKER (76 aa)) enclose the GIY-YIG domain.

This sequence belongs to the UPF0213 family.

The polypeptide is UPF0213 protein YhbQ (Escherichia coli O7:K1 (strain IAI39 / ExPEC)).